The following is a 101-amino-acid chain: Phosphoribosyl-AMP cyclohydrolase (101 aa).

Position 71 (Asp71) interacts with Mg(2+). Cys72 lines the Zn(2+) pocket. Residues Asp73 and Asp75 each coordinate Mg(2+). Positions 88 and 95 each coordinate Zn(2+).

Belongs to the PRA-CH family. Homodimer. It depends on Mg(2+) as a cofactor. Zn(2+) serves as cofactor.

It localises to the cytoplasm. It catalyses the reaction 1-(5-phospho-beta-D-ribosyl)-5'-AMP + H2O = 1-(5-phospho-beta-D-ribosyl)-5-[(5-phospho-beta-D-ribosylamino)methylideneamino]imidazole-4-carboxamide. It participates in amino-acid biosynthesis; L-histidine biosynthesis; L-histidine from 5-phospho-alpha-D-ribose 1-diphosphate: step 3/9. In terms of biological role, catalyzes the hydrolysis of the adenine ring of phosphoribosyl-AMP. The protein is Phosphoribosyl-AMP cyclohydrolase of Bacillus cereus (strain AH187).